Consider the following 335-residue polypeptide: Nucleoid-associated protein Ent638_2782 (335 aa).

The protein belongs to the YejK family.

The protein resides in the cytoplasm. The protein localises to the nucleoid. The chain is Nucleoid-associated protein Ent638_2782 from Enterobacter sp. (strain 638).